Here is a 356-residue protein sequence, read N- to C-terminus: Probable cytosolic iron-sulfur protein assembly protein 1 (356 aa).

WD repeat units lie at residues 34-73 (GHKRTVRSVAWSPNGEVLATASFDSTVGLWERIPENIRAE), 89-128 (GHDSECKSVAFSYNGNLLASCGRDKSVWVWEAQPDADYEC), 134-173 (EHSQDVKCVIWHPKEEILASASYDNTIKMYVDDPSCDWYC), 179-218 (AHSSTVWSLSFSPCGQFLASSSDDMTIWIWRRVSAAECVE), 244-291 (HFSG…ATLR), and 319-356 (AHGSVDVNCVKWAPMNTDGSAPTMIASAGDDGEIRIWT).

This sequence belongs to the WD repeat CIA1 family.

Functionally, essential component of the cytosolic iron-sulfur (Fe/S) protein assembly machinery. Required for the maturation of extramitochondrial Fe/S proteins. The chain is Probable cytosolic iron-sulfur protein assembly protein 1 from Malassezia globosa (strain ATCC MYA-4612 / CBS 7966) (Dandruff-associated fungus).